A 261-amino-acid chain; its full sequence is Immediate-early protein IE-0 (261 aa).

The segment at 212–257 adopts an RING-type zinc-finger fold; it reads CNVCKEISTDERFLKPKECCEYAICNACCVNMWKTATTHAKCPACR.

As to quaternary structure, interacts with proteins C42 and FP25. Interacts with host beta-tubulin. Interacts with Ac66 and vUb.

Its subcellular location is the host nucleus. The protein localises to the host cytoplasm. It localises to the virion. In terms of biological role, putative viral E3 ligase that plays an essential regulatory role in both viral DNA replication and transcriptional transactivation. The role in transcription has been shown to include activation of gene expression from early viral promoters. Also promotes the efficient egress of nucleocapsids from the host nucleus. May act as an E3 ligase that promotes ubiquitination of nucleocapsids proteins by vUbi and subsequent viral egress for the host nucleus. This Lepidoptera (butterflies and moths) protein is Immediate-early protein IE-0 (IE0).